Consider the following 110-residue polypeptide: WGEQEASILVPGDIVSIKLGDIVPADARIDQSGLTGESLPVTKNPGDEVFSGSTCKTGTLTLNKGIVGMTGDGVNDAPALKTLHGLQAPESTSLNLPNDKELSEIAEQAK.

The Mg(2+) site is built by Asp72 and Asp76. Positions Ala88–Lys110 are disordered. The span at Asn98–Lys110 shows a compositional bias: basic and acidic residues.

It belongs to the cation transport ATPase (P-type) (TC 3.A.3) family. Type IIIA subfamily. Post-translationally, the N-terminus is blocked.

Its subcellular location is the cell membrane. It catalyses the reaction ATP + H2O + H(+)(in) = ADP + phosphate + 2 H(+)(out). The plasma membrane ATPase of plants and fungi is a hydrogen ion pump. The proton gradient it generates drives the active transport of nutrients by H(+)-symport. The resulting external acidification and/or internal alkinization may mediate growth responses. The sequence is that of Plasma membrane ATPase from Avena sativa (Oat).